The chain runs to 349 residues: Palmitoyltransferase PFA5 (349 aa).

The next 2 helical transmembrane spans lie at 19–39 (LIPF…CHQF) and 57–77 (LIIV…LMLV). The DHHC domain maps to 126–176 (IWCSNCQSLKMSRTHHSTKVGYCVPRFDHYCVWIGTVLGRLNYKLFVQFTF). The S-palmitoyl cysteine intermediate role is filled by cysteine 156. The next 2 helical transmembrane spans lie at 170-190 (LFVQ…ISIA) and 204-224 (VYAV…LFLT).

It belongs to the DHHC palmitoyltransferase family. PFA5 subfamily.

Its subcellular location is the membrane. The enzyme catalyses L-cysteinyl-[protein] + hexadecanoyl-CoA = S-hexadecanoyl-L-cysteinyl-[protein] + CoA. The protein is Palmitoyltransferase PFA5 (PFA5) of Kluyveromyces lactis (strain ATCC 8585 / CBS 2359 / DSM 70799 / NBRC 1267 / NRRL Y-1140 / WM37) (Yeast).